Consider the following 89-residue polypeptide: Large ribosomal subunit protein bL31B (89 aa).

This sequence belongs to the bacterial ribosomal protein bL31 family. Type B subfamily. Part of the 50S ribosomal subunit.

In Haemophilus ducreyi (strain 35000HP / ATCC 700724), this protein is Large ribosomal subunit protein bL31B.